The primary structure comprises 230 residues: Nicotinamide riboside kinase (230 aa).

Residue 12–20 (GASCSGKST) participates in ATP binding. Mg(2+) contacts are provided by Ser19 and Asp38. Asp38 (proton acceptor) is an active-site residue. Substrate-binding positions include 38 to 41 (DDFY) and 56 to 57 (WD). An ATP-binding site is contributed by Arg153. Residues Arg154 and 159–160 (GY) each bind substrate. ATP contacts are provided by residues 157 to 159 (RTG) and 203 to 205 (RIQ).

This sequence belongs to the uridine kinase family. NRK subfamily.

It carries out the reaction beta-nicotinamide D-riboside + ATP = beta-nicotinamide D-ribonucleotide + ADP + H(+). The enzyme catalyses beta-D-ribosylnicotinate + ATP = nicotinate beta-D-ribonucleotide + ADP + H(+). Its pathway is cofactor biosynthesis; NAD(+) biosynthesis. Catalyzes the phosphorylation of nicotinamide riboside (NR) and nicotinic acid riboside (NaR) to form nicotinamide mononucleotide (NMN) and nicotinic acid mononucleotide (NaMN). In Schizosaccharomyces pombe (strain 972 / ATCC 24843) (Fission yeast), this protein is Nicotinamide riboside kinase (nrk1).